Here is a 166-residue protein sequence, read N- to C-terminus: Regulatory protein RecX (166 aa).

The protein belongs to the RecX family.

It localises to the cytoplasm. In terms of biological role, modulates RecA activity. The chain is Regulatory protein RecX from Salmonella arizonae (strain ATCC BAA-731 / CDC346-86 / RSK2980).